The chain runs to 831 residues: Periplasmic nitrate reductase (831 aa).

The segment at residues Met-1–Ala-31 is a signal peptide (tat-type signal). In terms of domain architecture, 4Fe-4S Mo/W bis-MGD-type spans Ile-41–Asp-97. Cys-48, Cys-51, Cys-55, and Cys-83 together coordinate [4Fe-4S] cluster. Mo-bis(molybdopterin guanine dinucleotide)-binding positions include Lys-85, Gln-152, Asn-177, Cys-181, Trp-214–Met-221, Ser-245–His-249, Gly-264–Asp-266, Met-375, Gln-379, Asn-485, Ser-511–Asp-512, Lys-534, Asp-561, and Thr-721–Ser-730. Trp-797 is a substrate binding site. Residues Asn-805 and Lys-822 each contribute to the Mo-bis(molybdopterin guanine dinucleotide) site.

The protein belongs to the prokaryotic molybdopterin-containing oxidoreductase family. NasA/NapA/NarB subfamily. Component of the periplasmic nitrate reductase NapAB complex composed of NapA and NapB. Requires [4Fe-4S] cluster as cofactor. Mo-bis(molybdopterin guanine dinucleotide) serves as cofactor. Predicted to be exported by the Tat system. The position of the signal peptide cleavage has not been experimentally proven.

It is found in the periplasm. The catalysed reaction is 2 Fe(II)-[cytochrome] + nitrate + 2 H(+) = 2 Fe(III)-[cytochrome] + nitrite + H2O. Functionally, catalytic subunit of the periplasmic nitrate reductase complex NapAB. Receives electrons from NapB and catalyzes the reduction of nitrate to nitrite. In Paracoccus pantotrophus (Thiosphaera pantotropha), this protein is Periplasmic nitrate reductase.